A 93-amino-acid polypeptide reads, in one-letter code: Exodeoxyribonuclease 7 small subunit (93 aa).

Residues 61–75 (IDDNGDEKVYEKQTD) show a composition bias toward basic and acidic residues. The tract at residues 61–93 (IDDNGDEKVYEKQTDDPSNNGGGNRGFGSADEQ) is disordered.

This sequence belongs to the XseB family. As to quaternary structure, heterooligomer composed of large and small subunits.

The protein localises to the cytoplasm. It catalyses the reaction Exonucleolytic cleavage in either 5'- to 3'- or 3'- to 5'-direction to yield nucleoside 5'-phosphates.. In terms of biological role, bidirectionally degrades single-stranded DNA into large acid-insoluble oligonucleotides, which are then degraded further into small acid-soluble oligonucleotides. In Limosilactobacillus reuteri (strain DSM 20016) (Lactobacillus reuteri), this protein is Exodeoxyribonuclease 7 small subunit.